Reading from the N-terminus, the 589-residue chain is C-type lectin domain family 4 member F (589 aa).

At 1 to 39 (MDGEAVRFCTDNQCVSLHPQEVDSVAMAPAAPKIPRLVQ) the chain is on the cytoplasmic side. A helical; Signal-anchor for type II membrane protein membrane pass occupies residues 40 to 60 (ATPAFMAVTLVFSLVTLFVVV). Topologically, residues 61–589 (QQQTRPVPKP…TPPCPWILSN (529 aa)) are extracellular. 8 N-linked (GlcNAc...) asparagine glycosylation sites follow: N79, N113, N207, N230, N244, N312, N385, and N399. A C-type lectin domain is found at 476-589 (NGGSLYYFSS…TPPCPWILSN (114 aa)).

It is found in the membrane. Its function is as follows. Receptor with an affinity for galactose and fucose. Could be involved in endocytosis. The sequence is that of C-type lectin domain family 4 member F (CLEC4F) from Homo sapiens (Human).